We begin with the raw amino-acid sequence, 360 residues long: Photosystem II protein D1 (360 aa).

The next 3 helical transmembrane spans lie at 29–46, 118–133, and 142–156; these read YIGW…TATS, HFLL…EWEL, and WISV…AAAA. Position 118 (His-118) interacts with chlorophyll a. Tyr-126 serves as a coordination point for pheophytin a. Residues Asp-170 and Glu-189 each coordinate [CaMn4O5] cluster. Residues 197–218 traverse the membrane as a helical segment; it reads FHQLGVAGVFGGSLFSAMHGSL. His-198 is a binding site for chlorophyll a. A quinone-binding positions include His-215 and 264-265; that span reads SF. Position 215 (His-215) interacts with Fe cation. Position 272 (His-272) interacts with Fe cation. The chain crosses the membrane as a helical span at residues 274–288; it reads FLGLWPVVGIWFTAM. [CaMn4O5] cluster is bound by residues His-332, Glu-333, Asp-342, and Ala-344. The propeptide occupies 345–360; it reads SSNSLPVSLVAPSVNG.

The protein belongs to the reaction center PufL/M/PsbA/D family. In terms of assembly, PSII is composed of 1 copy each of membrane proteins PsbA, PsbB, PsbC, PsbD, PsbE, PsbF, PsbH, PsbI, PsbJ, PsbK, PsbL, PsbM, PsbT, PsbX, PsbY, PsbZ, Psb30/Ycf12, at least 3 peripheral proteins of the oxygen-evolving complex and a large number of cofactors. It forms dimeric complexes. Requires The D1/D2 heterodimer binds P680, chlorophylls that are the primary electron donor of PSII, and subsequent electron acceptors. It shares a non-heme iron and each subunit binds pheophytin, quinone, additional chlorophylls, carotenoids and lipids. D1 provides most of the ligands for the Mn4-Ca-O5 cluster of the oxygen-evolving complex (OEC). There is also a Cl(-1) ion associated with D1 and D2, which is required for oxygen evolution. The PSII complex binds additional chlorophylls, carotenoids and specific lipids. as cofactor. Post-translationally, tyr-161 forms a radical intermediate that is referred to as redox-active TyrZ, YZ or Y-Z. C-terminally processed by CTPA; processing is essential to allow assembly of the oxygen-evolving complex and thus photosynthetic growth.

The protein resides in the plastid. It localises to the chloroplast thylakoid membrane. The catalysed reaction is 2 a plastoquinone + 4 hnu + 2 H2O = 2 a plastoquinol + O2. In terms of biological role, photosystem II (PSII) is a light-driven water:plastoquinone oxidoreductase that uses light energy to abstract electrons from H(2)O, generating O(2) and a proton gradient subsequently used for ATP formation. It consists of a core antenna complex that captures photons, and an electron transfer chain that converts photonic excitation into a charge separation. The D1/D2 (PsbA/PsbD) reaction center heterodimer binds P680, the primary electron donor of PSII as well as several subsequent electron acceptors. This is Photosystem II protein D1 from Gracilaria tenuistipitata var. liui (Red alga).